Consider the following 358-residue polypeptide: Probable D-xylulose reductase A (358 aa).

3 residues coordinate Zn(2+): Cys47, His72, and Glu73. 182–187 (GAGPVG) contributes to the NAD(+) binding site.

This sequence belongs to the zinc-containing alcohol dehydrogenase family. Requires Zn(2+) as cofactor.

It carries out the reaction xylitol + NAD(+) = D-xylulose + NADH + H(+). The protein operates within carbohydrate degradation; L-arabinose degradation via L-arabinitol; D-xylulose 5-phosphate from L-arabinose (fungal route): step 4/5. Xylitol dehydrogenase which catalyzes the conversion of xylitol to D-xylulose. Xylose is a major component of hemicelluloses such as xylan. Most fungi utilize D-xylose via three enzymatic reactions, xylose reductase (XR), xylitol dehydrogenase (XDH), and xylulokinase, to form xylulose 5-phosphate, which enters pentose phosphate pathway. The protein is Probable D-xylulose reductase A (xdhA) of Aspergillus clavatus (strain ATCC 1007 / CBS 513.65 / DSM 816 / NCTC 3887 / NRRL 1 / QM 1276 / 107).